The following is a 474-amino-acid chain: MAGRQREHPTVTPYLQETSPERPPPLPPKKKLRKNLQVPEQVHAPALSPEVVPDSEEDEEVLYHGFSYPGVEVVQKGNGKRQIRRLEKTVIPRDLTPPEEEENNQSGSSKAVTMLITNPQVDPLVSAWEKGMELMNVLMEKYHVENDEKTAFKFLPEQNAVYRKICQTWLNEERRGLSLTFTTQKTFTELMGRFLAAYVETYAGVKHHNWDTTGCAVWAHGCTREEGVLRCFHGREMIQKEQVVEVDVGSENGQRALKEQPSKTKVVQNRWGRSVVQIKNDDARCCAEDVSCGNNMFSSKSCGLFFSEGLKAQIAFKQMQAFLQAEYPQMQRGQQRILVPLRCECLNKKDLVPQLGRQMCKVTPFALSGAEDLKTSEVTDKSALASILHPCVLVFQCANPVYRNSRGSAGPNCDFKISAPDVISALQLVRQFWKENVEDPLPKLIIPEFKWSTRLQYRNVALPTGHGDAEVEPF.

A disordered region spans residues 1-34 (MAGRQREHPTVTPYLQETSPERPPPLPPKKKLRK). Tyr-142 is subject to Phosphotyrosine; by host. Cys-231 and His-233 together coordinate Zn(2+). Positions 244–278 (VEVDVGSENGQRALKEQPSKTKVVQNRWGRSVVQI) are flexible loop. Zn(2+) is bound by residues Cys-286, Cys-302, Cys-343, Cys-345, Cys-397, and Cys-413. Residues 460–474 (VALPTGHGDAEVEPF) are C-terminal arm, DBP binding.

It belongs to the adenoviridae E2A DNA-binding protein family. Homomultimerizes on viral ssDNA bound to pTP. Forms a initiation complex with viral polymerase, pTP and hosts NFIA and POU2F1/OCT1. Interacts with host SRCAP.

The protein localises to the host nucleus. In terms of biological role, plays a role in the elongation phase of viral strand displacement replication by unwinding the template in an ATP-independent fashion, employing its capacity to form multimers. Also enhances the rate of initiation. Released from template upon second strand synthesis. Assembles in complex with viral pTP, viral pol, host NFIA and host POU2F1/OCT1 on viral origin of replication. Covers the whole ssDNA genome during synthesis. The complementary strand synthesis induces its relese from DNA template. May inhibit cellular transcription mediated by the interaction between host SRCAP and CBP. This is DNA-binding protein from Homo sapiens (Human).